The sequence spans 467 residues: MRSLTRRDFLKSGILASSLSCIPQSVMAASRLPLFIPPLLEAKRGRPIFLTMQAAQTSFIEKKLTEVWGFNGHHLGPTVRVEQGDFVKLNYRNNLTQAVAMNIQGLQAHSELIGGIGRVLKAGEGWAPILPITQPASTCFYHACTLANSAYQTYRGLVGMWIINDKDTHQSKLPKKYGVDDIPLILQDVLLNSKGEQVFQNQPHFLGERLLVNGVEAPYLNVPKGLVRLRLLNASLSRSYDLTFDDERAFFLIAREQGYLPQTKIVKKVSLAPSERVELLVDLSEGGNVTLITGSKRNLLNKIGTIFSSDMLVDNVIVELRTEGVKSVFYNPSHWQFHTDAPSLLAKKNMKTREFYFDVSNATINQQRFEPNRIDISTKRGQIERWILSSSRPVGFKIQGARFVMKSINDQPVEQSDIAWKDSLWIDGKVEILVQFNHASSTKFPFIFGSSDLVLADQGCLGSIVVQ.

The tat-type signal signal peptide spans 1–28 (MRSLTRRDFLKSGILASSLSCIPQSVMA).

Belongs to the FtsP family. Predicted to be exported by the Tat system. The position of the signal peptide cleavage has not been experimentally proven.

Its subcellular location is the periplasm. Functionally, cell division protein that is required for growth during stress conditions. May be involved in protecting or stabilizing the divisomal assembly under conditions of stress. This is Cell division protein FtsP from Histophilus somni (strain 2336) (Haemophilus somnus).